We begin with the raw amino-acid sequence, 207 residues long: Protein GrpE (207 aa).

A disordered region spans residues 1 to 31 (MSEHQTPPEEDLTVANGDSAEAVSEPDVTVA).

Belongs to the GrpE family. In terms of assembly, homodimer.

Its subcellular location is the cytoplasm. In terms of biological role, participates actively in the response to hyperosmotic and heat shock by preventing the aggregation of stress-denatured proteins, in association with DnaK and GrpE. It is the nucleotide exchange factor for DnaK and may function as a thermosensor. Unfolded proteins bind initially to DnaJ; upon interaction with the DnaJ-bound protein, DnaK hydrolyzes its bound ATP, resulting in the formation of a stable complex. GrpE releases ADP from DnaK; ATP binding to DnaK triggers the release of the substrate protein, thus completing the reaction cycle. Several rounds of ATP-dependent interactions between DnaJ, DnaK and GrpE are required for fully efficient folding. This is Protein GrpE from Synechococcus elongatus (strain ATCC 33912 / PCC 7942 / FACHB-805) (Anacystis nidulans R2).